The following is a 133-amino-acid chain: ATP synthase epsilon chain, chloroplastic (133 aa).

This sequence belongs to the ATPase epsilon chain family. F-type ATPases have 2 components, CF(1) - the catalytic core - and CF(0) - the membrane proton channel. CF(1) has five subunits: alpha(3), beta(3), gamma(1), delta(1), epsilon(1). CF(0) has three main subunits: a, b and c.

It localises to the plastid. Its subcellular location is the chloroplast thylakoid membrane. Its function is as follows. Produces ATP from ADP in the presence of a proton gradient across the membrane. The protein is ATP synthase epsilon chain, chloroplastic of Lactuca sativa (Garden lettuce).